A 397-amino-acid chain; its full sequence is S-layer protein B (397 aa).

Positions 1–24 are cleaved as a signal peptide; it reads MVVKKTFVLSTLILISVVALVSTA. Residues 259 to 314 are a coiled coil; that stretch reads INALNNEVSTLRSEISSLNSTIASLNKSLANANTQISNLQSEITTLNSEIGKLNST. The helical transmembrane segment at 373–393 threads the bilayer; the sequence is GGIIAGIIGLIVAIVAIVLVM.

It belongs to the Sulfolobales SlaB family. In terms of assembly, the mushroom-shaped unit cells of the Sulfolobales' S-layers may consist of three SlaB subunits and six SlaA subunits.

The protein resides in the secreted. It is found in the cell wall. It localises to the S-layer. Its subcellular location is the cell membrane. Functionally, S-layer small protein. May anchor the complex to the cell membrane. The sequence is that of S-layer protein B from Saccharolobus solfataricus (strain ATCC 35092 / DSM 1617 / JCM 11322 / P2) (Sulfolobus solfataricus).